The chain runs to 433 residues: E3 ubiquitin-protein ligase RGLG5 (433 aa).

Positions 1–61 (MGGSSSKESP…SYNSGRQTPK (61 aa)) are disordered. Gly2 is lipidated: N-myristoyl glycine. Low complexity predominate over residues 22–39 (SVSGSSSYSSAWDQSSYY). Residues 40–61 (QTPNHPSASPVSSYNSGRQTPK) show a composition bias toward polar residues. One can recognise a VWFA domain in the interval 93 to 313 (NLIVGIDVTK…KEAEFALSAL (221 aa)). The tract at residues 340–383 (IALPPPTYATQSMRNSPRTSRSTSFQNKPYDNGVSSTPPSTTHN) is disordered. The span at 347-383 (YATQSMRNSPRTSRSTSFQNKPYDNGVSSTPPSTTHN) shows a compositional bias: polar residues. The RING-type zinc-finger motif lies at 390–423 (CPVCLVSAKNMAFNCGHQTCAGCGEDLHVCPICR).

Interacts with PP2CA. In terms of processing, N-myristoylated.

The protein resides in the cell membrane. It carries out the reaction S-ubiquitinyl-[E2 ubiquitin-conjugating enzyme]-L-cysteine + [acceptor protein]-L-lysine = [E2 ubiquitin-conjugating enzyme]-L-cysteine + N(6)-ubiquitinyl-[acceptor protein]-L-lysine.. In terms of biological role, together with RGLG1, mediates the ubiquitination and subsequent proteasomal degradation of the target protein PP2CA. Functions as a positive regulator of abscisic acid (ABA) signaling through ABA-dependent degradation of PP2CA, a major inhibitor of ABA signaling. In Arabidopsis thaliana (Mouse-ear cress), this protein is E3 ubiquitin-protein ligase RGLG5.